The primary structure comprises 504 residues: L-carnitine/gamma-butyrobetaine antiporter (504 aa).

Helical transmembrane passes span 10-30 (MEPKVFFPPLIIVGILCWLTV), 51-71 (WGWAFEWYMVVMLFGWFWLVF), 92-112 (IFMMFASCTSAAVLFWGSIEI), 143-163 (GPLPWATYSFLSVAFAYFFFV), 195-215 (FYLVALIFAMGTSLGLATPLV), 231-251 (LDAIIITCWIILNAICVACGL), 263-283 (SYLSFLMLGWVFIVSGASFIM), 316-336 (WSVFYWAWWVIYAIQMSIFLA), 347-367 (LCFGMVLGLTASTWILWTVLG), 398-418 (WAALPLSTATMWGFFILCFIA), 446-466 (LLVRIGWSILVGIIGIVLLAL), and 475-495 (AIIAGGCPLFFVNIMVTLSFI).

Belongs to the BCCT transporter (TC 2.A.15) family. CaiT subfamily. Homotrimer.

Its subcellular location is the cell inner membrane. The enzyme catalyses 4-(trimethylamino)butanoate(in) + (R)-carnitine(out) = 4-(trimethylamino)butanoate(out) + (R)-carnitine(in). It functions in the pathway amine and polyamine metabolism; carnitine metabolism. Functionally, catalyzes the exchange of L-carnitine for gamma-butyrobetaine. This Shigella dysenteriae serotype 1 (strain Sd197) protein is L-carnitine/gamma-butyrobetaine antiporter.